The following is a 92-amino-acid chain: MLCSIYKSSKKENTYLYINNKDDFSDVPDSLMGTFGAPQFVMVLKLEGRKLALADVEKVKESLATVGYYLQVPPPVTNLLHQYKAAKASQTS.

The 84-residue stretch at 1-84 folds into the YcgL domain; it reads MLCSIYKSSK…PVTNLLHQYK (84 aa).

In Photobacterium profundum (strain SS9), this protein is YcgL domain-containing protein PBPRA1080.